The sequence spans 141 residues: MTIDINAIREALPHRYPMLLVDRVLEVSEDEITAIKNVTINEPFFNGHFPQYPVMPGVLIMEALAQTAGVLELSKPENKGKLVFYAGMDKVKFKKQVVPGDQLVMTAKFVKRRGTIAVVEAKAEVDGKLAASGTLTFAIGS.

The active site involves His48.

This sequence belongs to the thioester dehydratase family. FabZ subfamily.

The protein localises to the cytoplasm. It catalyses the reaction a (3R)-hydroxyacyl-[ACP] = a (2E)-enoyl-[ACP] + H2O. Functionally, involved in unsaturated fatty acids biosynthesis. Catalyzes the dehydration of short chain beta-hydroxyacyl-ACPs and long chain saturated and unsaturated beta-hydroxyacyl-ACPs. The sequence is that of 3-hydroxyacyl-[acyl-carrier-protein] dehydratase FabZ from Streptococcus thermophilus (strain CNRZ 1066).